The chain runs to 339 residues: Phenylalanine--tRNA ligase alpha subunit (339 aa).

Glu-254 provides a ligand contact to Mg(2+).

Belongs to the class-II aminoacyl-tRNA synthetase family. Phe-tRNA synthetase alpha subunit type 1 subfamily. Tetramer of two alpha and two beta subunits. Mg(2+) is required as a cofactor.

The protein resides in the cytoplasm. It carries out the reaction tRNA(Phe) + L-phenylalanine + ATP = L-phenylalanyl-tRNA(Phe) + AMP + diphosphate + H(+). In Clostridium beijerinckii (strain ATCC 51743 / NCIMB 8052) (Clostridium acetobutylicum), this protein is Phenylalanine--tRNA ligase alpha subunit.